The sequence spans 287 residues: Phosphatidylserine decarboxylase proenzyme (287 aa).

Residues aspartate 90, histidine 147, and serine 252 each act as charge relay system; for autoendoproteolytic cleavage activity in the active site. The active-site Schiff-base intermediate with substrate; via pyruvic acid; for decarboxylase activity is serine 252. Residue serine 252 is modified to Pyruvic acid (Ser); by autocatalysis.

This sequence belongs to the phosphatidylserine decarboxylase family. PSD-B subfamily. Prokaryotic type I sub-subfamily. Heterodimer of a large membrane-associated beta subunit and a small pyruvoyl-containing alpha subunit. It depends on pyruvate as a cofactor. Post-translationally, is synthesized initially as an inactive proenzyme. Formation of the active enzyme involves a self-maturation process in which the active site pyruvoyl group is generated from an internal serine residue via an autocatalytic post-translational modification. Two non-identical subunits are generated from the proenzyme in this reaction, and the pyruvate is formed at the N-terminus of the alpha chain, which is derived from the carboxyl end of the proenzyme. The autoendoproteolytic cleavage occurs by a canonical serine protease mechanism, in which the side chain hydroxyl group of the serine supplies its oxygen atom to form the C-terminus of the beta chain, while the remainder of the serine residue undergoes an oxidative deamination to produce ammonia and the pyruvoyl prosthetic group on the alpha chain. During this reaction, the Ser that is part of the protease active site of the proenzyme becomes the pyruvoyl prosthetic group, which constitutes an essential element of the active site of the mature decarboxylase.

It is found in the cell membrane. It carries out the reaction a 1,2-diacyl-sn-glycero-3-phospho-L-serine + H(+) = a 1,2-diacyl-sn-glycero-3-phosphoethanolamine + CO2. It participates in phospholipid metabolism; phosphatidylethanolamine biosynthesis; phosphatidylethanolamine from CDP-diacylglycerol: step 2/2. Functionally, catalyzes the formation of phosphatidylethanolamine (PtdEtn) from phosphatidylserine (PtdSer). This Pseudomonas putida (strain ATCC 700007 / DSM 6899 / JCM 31910 / BCRC 17059 / LMG 24140 / F1) protein is Phosphatidylserine decarboxylase proenzyme.